The chain runs to 203 residues: Small ribosomal subunit protein uS4 (203 aa).

The region spanning 93–153 (RRFDNVVFRA…PKSKNMSAVS (61 aa)) is the S4 RNA-binding domain.

The protein belongs to the universal ribosomal protein uS4 family. Part of the 30S ribosomal subunit. Contacts protein S5. The interaction surface between S4 and S5 is involved in control of translational fidelity.

Its function is as follows. One of the primary rRNA binding proteins, it binds directly to 16S rRNA where it nucleates assembly of the body of the 30S subunit. In terms of biological role, with S5 and S12 plays an important role in translational accuracy. The polypeptide is Small ribosomal subunit protein uS4 (Chlorobium phaeovibrioides (strain DSM 265 / 1930) (Prosthecochloris vibrioformis (strain DSM 265))).